A 347-amino-acid polypeptide reads, in one-letter code: S-adenosylmethionine:tRNA ribosyltransferase-isomerase (347 aa).

Belongs to the QueA family. Monomer.

It is found in the cytoplasm. The enzyme catalyses 7-aminomethyl-7-carbaguanosine(34) in tRNA + S-adenosyl-L-methionine = epoxyqueuosine(34) in tRNA + adenine + L-methionine + 2 H(+). The protein operates within tRNA modification; tRNA-queuosine biosynthesis. Transfers and isomerizes the ribose moiety from AdoMet to the 7-aminomethyl group of 7-deazaguanine (preQ1-tRNA) to give epoxyqueuosine (oQ-tRNA). The chain is S-adenosylmethionine:tRNA ribosyltransferase-isomerase from Bordetella bronchiseptica (strain ATCC BAA-588 / NCTC 13252 / RB50) (Alcaligenes bronchisepticus).